The primary structure comprises 316 residues: Calumenin-B (316 aa).

An N-terminal signal peptide occupies residues 1–19 (MELRPLVMCFALCVVYASS). 6 EF-hand domains span residues 69–104 (ESKE…SQKR), 105–140 (WIYD…YILD), 152–187 (QMIS…EEYD), 189–224 (MKDI…QEGD), 230–265 (WVRT…SDYD), and 266–301 (HAEA…FVGS). Ca(2+) is bound by residues Asp82, Asp84, Asp86, Tyr88, Glu93, Asp118, Asn120, Asp122, and Glu129. Asn132 is a glycosylation site (N-linked (GlcNAc...) asparagine). The Ca(2+) site is built by Asp165, Asp167, Asp169, Lys171, Glu176, Asp202, Asn204, Asp206, Glu213, Asp243, Asn245, Asp247, Arg249, Glu254, Asp279, Asp281, Asp283, Lys285, and Glu290. A Prevents secretion from ER motif is present at residues 313 to 316 (HDEF).

Belongs to the CREC family. Interacts with ggcx.

The protein resides in the endoplasmic reticulum membrane. Its subcellular location is the golgi apparatus. It localises to the secreted. The protein localises to the melanosome. It is found in the sarcoplasmic reticulum lumen. In terms of biological role, involved in regulation of vitamin K-dependent carboxylation of multiple N-terminal glutamate residues. Seems to inhibit gamma-carboxylase ggcx. Binds 7 calcium ions with a low affinity. In Salmo salar (Atlantic salmon), this protein is Calumenin-B (calub).